Here is a 73-residue protein sequence, read N- to C-terminus: Large ribosomal subunit protein bL31 (73 aa).

Belongs to the bacterial ribosomal protein bL31 family. Type A subfamily. As to quaternary structure, part of the 50S ribosomal subunit.

Functionally, binds the 23S rRNA. The chain is Large ribosomal subunit protein bL31 from Agrobacterium fabrum (strain C58 / ATCC 33970) (Agrobacterium tumefaciens (strain C58)).